The primary structure comprises 437 residues: Nuclear hormone receptor family member nhr-100 (437 aa).

The segment at residues 21–96 (DTSCLVCGDP…VGMDANAVRS (76 aa)) is a DNA-binding region (nuclear receptor). 2 NR C4-type zinc fingers span residues 24-44 (CLVC…CNGC) and 60-79 (CSFN…CRAC). One can recognise an NR LBD domain in the interval 141–409 (QTKEIIAHML…SGGGLPYDIH (269 aa)).

It belongs to the nuclear hormone receptor family.

It is found in the nucleus. Its function is as follows. Orphan nuclear receptor. This is Nuclear hormone receptor family member nhr-100 (nhr-100) from Caenorhabditis elegans.